A 575-amino-acid polypeptide reads, in one-letter code: Septation ring formation regulator EzrA (575 aa).

Residues 1 to 8 (MSNGQLIY) are Extracellular-facing. The helical transmembrane segment at 9-27 (LMVAIAVILVLAYVVAIFL) threads the bilayer. At 28 to 575 (RKRNEGRLEA…YEKTRETIRF (548 aa)) the chain is on the cytoplasmic side. Coiled coils occupy residues 105–191 (LKAS…FVTL), 265–301 (LYEA…LYDI), 354–416 (VRRI…IEKD), and 456–526 (TASN…IQEA).

Belongs to the EzrA family.

It localises to the cell membrane. Functionally, negative regulator of FtsZ ring formation; modulates the frequency and position of FtsZ ring formation. Inhibits FtsZ ring formation at polar sites. Interacts either with FtsZ or with one of its binding partners to promote depolymerization. This Streptococcus pneumoniae serotype 4 (strain ATCC BAA-334 / TIGR4) protein is Septation ring formation regulator EzrA.